Reading from the N-terminus, the 121-residue chain is Large ribosomal subunit protein uL18 (121 aa).

Belongs to the universal ribosomal protein uL18 family. Part of the 50S ribosomal subunit; part of the 5S rRNA/L5/L18/L25 subcomplex. Contacts the 5S and 23S rRNAs.

Functionally, this is one of the proteins that bind and probably mediate the attachment of the 5S RNA into the large ribosomal subunit, where it forms part of the central protuberance. The chain is Large ribosomal subunit protein uL18 from Paraburkholderia xenovorans (strain LB400).